The primary structure comprises 456 residues: MSFTIAIIGRPNVGKSTLFNRLVGQKLALVDDMPGVTRDRREGEAKLGDLQFTIIDTAGLDGGPKGSLTARMQEQTETAIALADALFFVIDARAGLTPADRTFADFARRADKPVLLLANKSEGKHGELGAMESYALGLGDPIQISAEHGEGMGELYDALRGLVPETEDEVDEHEETDEERAARPIRVAIVGRPNAGKSTLINHLLGEERLLTSPEAGTTRDSIAVEIEYKGRGFRIFDTAGLRRRSRIEEKLEKLSVADALRAVRFAEVVVLMMDAQNRFEEQDLRIADLIEREGRALVIAVNKWDLMESKPGQISALRHDVDHWLPQVSGVPIVAVSGLMGEGIDRLMQAIVESYAVWNRRVPTAALNRWFEEAIANNPPPAVSGRRLKLNYITQTKARPPSFVLFCSRADAIPQSYLRYLINSMRETFELPGTPVRITLREKANPFAHKRKRPS.

EngA-type G domains are found at residues 3–167 (FTIA…PETE) and 185–360 (IRVA…AVWN). GTP contacts are provided by residues 9 to 16 (GRPNVGKS), 56 to 60 (DTAGL), 119 to 122 (NKSE), 191 to 198 (GRPNAGKS), 238 to 242 (DTAGL), and 303 to 306 (NKWD). The KH-like domain maps to 361–445 (RRVPTAALNR…PVRITLREKA (85 aa)).

Belongs to the TRAFAC class TrmE-Era-EngA-EngB-Septin-like GTPase superfamily. EngA (Der) GTPase family. Associates with the 50S ribosomal subunit.

Its function is as follows. GTPase that plays an essential role in the late steps of ribosome biogenesis. The chain is GTPase Der from Bradyrhizobium sp. (strain BTAi1 / ATCC BAA-1182).